The sequence spans 351 residues: AA9 family lytic polysaccharide monooxygenase A (351 aa).

An N-terminal signal peptide occupies residues 1–20 (MSNKAATLLAALSGAALVAA). Cu(2+) is bound by residues histidine 21 and histidine 107. Cysteine 76 and cysteine 196 are oxidised to a cystine. O2-binding residues include histidine 182 and glutamine 191. Tyrosine 193 is a binding site for Cu(2+). Residues 315–351 (GVAPKWGQCGGNGWTGPTVCASGSTCTVLNPYYSQCI) enclose the CBM1 domain.

Belongs to the polysaccharide monooxygenase AA9 family. It depends on Cu(2+) as a cofactor.

The protein resides in the secreted. The catalysed reaction is [(1-&gt;4)-beta-D-glucosyl]n+m + reduced acceptor + O2 = 4-dehydro-beta-D-glucosyl-[(1-&gt;4)-beta-D-glucosyl]n-1 + [(1-&gt;4)-beta-D-glucosyl]m + acceptor + H2O.. Its function is as follows. Lytic polysaccharide monooxygenase (LPMO) that depolymerizes crystalline and amorphous polysaccharides via the oxidation of scissile alpha- or beta-(1-4)-glycosidic bonds, yielding C1 and C4 oxidation products. Catalysis by LPMOs requires the reduction of the active-site copper from Cu(II) to Cu(I) by a reducing agent and H(2)O(2) or O(2) as a cosubstrate. This is AA9 family lytic polysaccharide monooxygenase A from Podospora anserina (strain S / ATCC MYA-4624 / DSM 980 / FGSC 10383) (Pleurage anserina).